The following is a 76-amino-acid chain: Large ribosomal subunit protein uL29 (76 aa).

This sequence belongs to the universal ribosomal protein uL29 family.

The chain is Large ribosomal subunit protein uL29 from Corynebacterium aurimucosum (strain ATCC 700975 / DSM 44827 / CIP 107346 / CN-1) (Corynebacterium nigricans).